The primary structure comprises 79 residues: Sec-independent protein translocase protein TatA (79 aa).

Residues 1–21 (MGSLSIWHWIVVIAVVLLLFG) traverse the membrane as a helical segment. Basic and acidic residues predominate over residues 42–60 (GLQDDEKTAEKPDAVKSLD). The disordered stretch occupies residues 42-79 (GLQDDEKTAEKPDAVKSLDHNATTGTPPNRTDVGSKAV). Residues 61-70 (HNATTGTPPN) show a composition bias toward polar residues.

It belongs to the TatA/E family. In terms of assembly, the Tat system comprises two distinct complexes: a TatABC complex, containing multiple copies of TatA, TatB and TatC subunits, and a separate TatA complex, containing only TatA subunits. Substrates initially bind to the TatABC complex, which probably triggers association of the separate TatA complex to form the active translocon.

It is found in the cell inner membrane. Part of the twin-arginine translocation (Tat) system that transports large folded proteins containing a characteristic twin-arginine motif in their signal peptide across membranes. TatA could form the protein-conducting channel of the Tat system. The protein is Sec-independent protein translocase protein TatA of Rhodopseudomonas palustris (strain HaA2).